Consider the following 449-residue polypeptide: C4-dicarboxylate transport protein 1 (449 aa).

8 helical membrane-spanning segments follow: residues 16-38 (FLQV…DLAV), 53-71 (MLIA…SGAG), 84-106 (VIYF…YSLG), 157-176 (ILQV…LVGE), 197-219 (GMIV…ARYG), 229-251 (LVLV…VLRL), 311-333 (GFSI…PLAM), and 358-380 (LVIL…VLVL).

The protein belongs to the dicarboxylate/amino acid:cation symporter (DAACS) (TC 2.A.23) family.

It is found in the cell inner membrane. In terms of biological role, responsible for the transport of dicarboxylates such as succinate, fumarate, and malate from the periplasm across the membrane. This chain is C4-dicarboxylate transport protein 1 (dctA1), found in Pseudomonas aeruginosa (strain ATCC 15692 / DSM 22644 / CIP 104116 / JCM 14847 / LMG 12228 / 1C / PRS 101 / PAO1).